A 781-amino-acid chain; its full sequence is Putative amine oxidase [copper-containing] (781 aa).

Positions 1-34 (MSLPKTANGMDKLKLCYLLLFYLGSSSLTEVSGA) are cleaved as a signal peptide. Cysteines 199 and 203 form a disulfide. Residue 385–395 (FFDSSYMIGMN) participates in substrate binding. D387 (proton acceptor) is an active-site residue. A disulfide bridge links C405 with C432. A substrate-binding site is contributed by 472 to 477 (IANYDY). The Schiff-base intermediate with substrate; via topaquinone role is filled by Y475. Y475 is modified (2',4',5'-topaquinone). 2 residues coordinate Cu cation: H525 and H527. Ca(2+) contacts are provided by D534, D536, E579, F671, D674, E676, D682, and L683. Mn(2+)-binding residues include D534 and D536. Residue D682 coordinates Mn(2+). H693 lines the Cu cation pocket.

It belongs to the copper/topaquinone oxidase family. Homodimer. It depends on Cu cation as a cofactor. Ca(2+) is required as a cofactor. L-topaquinone serves as cofactor. Requires Mn(2+) as cofactor. Post-translationally, topaquinone (TPQ) is generated by copper-dependent autoxidation of a specific tyrosyl residue. As to expression, prismatic layer of shell (at protein level). Expressed primarily in the mantle with highest level in the mantle edge and lower level in the mantle pallium.

It localises to the secreted. In Margaritifera margaritifera (Freshwater pearl mussel), this protein is Putative amine oxidase [copper-containing].